Consider the following 450-residue polypeptide: BAG family molecular chaperone regulator 5 (450 aa).

5 consecutive BAG domains span residues 9–86 (SIKR…EQNA), 95–167 (EAIF…ESCA), 182–260 (SVSK…DLDE), 275–350 (SILK…DLKE), and 365–442 (EHQS…YYLD).

In terms of assembly, binds to the ATPase domain of HSP/HSC70 chaperones.

Co-chaperone for HSP/HSP70 proteins. It functions as a nucleotide-exchange factor promoting the release of ADP from HSP70, thereby activating HSP70-mediated protein refolding. The sequence is that of BAG family molecular chaperone regulator 5 (BAG5) from Gallus gallus (Chicken).